The following is a 72-amino-acid chain: SRY-related protein ADW2 (72 aa).

Residues valine 1 to lysine 69 constitute a DNA-binding region (HMG box).

Its subcellular location is the nucleus. In Alligator mississippiensis (American alligator), this protein is SRY-related protein ADW2.